A 126-amino-acid chain; its full sequence is MAIVGLGTDIAEIERVEKALSRSGDAFAERILSQSEFEIYQELKQKGRFLAKRFAAKEAASKALGTGIAHGVTFHDFTISNDENGKPMLTLSGKALELSQKSHIANIHLTISDERHYAVATVIFES.

2 residues coordinate Mg(2+): aspartate 9 and glutamate 58.

Belongs to the P-Pant transferase superfamily. AcpS family. The cofactor is Mg(2+).

It localises to the cytoplasm. It catalyses the reaction apo-[ACP] + CoA = holo-[ACP] + adenosine 3',5'-bisphosphate + H(+). Functionally, transfers the 4'-phosphopantetheine moiety from coenzyme A to a Ser of acyl-carrier-protein. The polypeptide is Holo-[acyl-carrier-protein] synthase (Aliivibrio fischeri (strain MJ11) (Vibrio fischeri)).